Consider the following 2222-residue polypeptide: Voltage-dependent R-type calcium channel subunit alpha-1E (2222 aa).

Residues 1-40 (MALYNPIPVRQNCFTVNRSLFIFGEDNIVRKYAKKLIDWP) lie on the Cytoplasmic side of the membrane. One copy of the I repeat lies at 27 to 305 (NIVRKYAKKL…LVLGVLSGEF (279 aa)). Residues 41–59 (PFEYMILATIIANCIVLAL) form a helical membrane-spanning segment. At 60–78 (EQHLPEDDKTPMSRRLEKT) the chain is on the extracellular side. A helical transmembrane segment spans residues 79–97 (EPYFIGIFCFEAGIKIVAL). Residues 98 to 109 (GFIFHKGSYLRN) are Cytoplasmic-facing. The chain crosses the membrane as a helical span at residues 110–124 (GWNVMDFIVVLSGIL). Residues 125–136 (ATAGTHFNTHVD) lie on the Extracellular side of the membrane. The chain crosses the membrane as a helical span at residues 137–156 (LRTLRAVRVLRPLKLVSGIP). Over 157-174 (SLQIVLKSIMKAMVPLLQ) the chain is Cytoplasmic. Residues 175 to 195 (IGLLLFFAILMFAIIGLEFYS) traverse the membrane as a helical segment. Residues 196–277 (GKLHRACFMN…NTNDALGATW (82 aa)) are Extracellular-facing. A glycan (N-linked (GlcNAc...) asparagine) is linked at Asn205. Residues 278–301 (NWLYFIPLIIIGSFFVLNLVLGVL) traverse the membrane as a helical segment. Residues 302–427 (SGEFAKERER…ISIRHMVKSQ (126 aa)) are Cytoplasmic-facing. Residues 325-342 (QQIERELNGYRAWIDKAE) form a binding to the beta subunit region. Ca(2+) is bound at residue Asp377. Ser378 carries the post-translational modification Phosphoserine. Ca(2+) contacts are provided by Ser379, Glu381, and Cys383. The residue at position 391 (Thr391) is a Phosphothreonine. An II repeat occupies 413–657 (ERLLRISIRH…VFLAIAVDNL (245 aa)). The chain crosses the membrane as a helical span at residues 428-447 (VFYWIVLSVVALNTACVAIV). Residues 448 to 460 (HHNQPQWLTHLLY) lie on the Extracellular side of the membrane. A helical membrane pass occupies residues 461–480 (YAEFLFLGLFLLEMSLKMYG). Over 481 to 489 (MGPRLYFHS) the chain is Cytoplasmic. A helical membrane pass occupies residues 490 to 508 (SFNCFDFGVTVGSIFEVVW). At 509–518 (AIFRPGTSFG) the chain is on the extracellular side. The helical transmembrane segment at 519–537 (ISVLRALRLLRIFKITKYW) threads the bilayer. Topologically, residues 538–556 (ASLRNLVVSLMSSMKSIIS) are cytoplasmic. Residues 557–576 (LLFLLFLFIVVFALLGMQLF) traverse the membrane as a helical segment. At 577–629 (GGRFNFNDGTPSANFDTFPAAIMTVFQILTGEDWNEVMYNGIRSQGGVSSGMW) the chain is on the extracellular side. A helical membrane pass occupies residues 630–654 (SAIYFIVLTLFGNYTLLNVFLAIAV). Over 655 to 1100 (DNLANAQELT…TNPIRKACHY (446 aa)) the chain is Cytoplasmic. The tract at residues 680–727 (LQKAKEVSPMSAPNMPSIERDRRRRHHMSMWEPRSSHLRERRRRHHMS) is disordered. Residues Ser687, Ser696, Ser744, Ser766, and Ser806 each carry the phosphoserine modification. Disordered regions lie at residues 820–944 (NQRS…VPRG) and 1042–1076 (NKTD…RETG). Over residues 864-877 (RHRQSQRRSRHRRV) the composition is skewed to basic residues. Over residues 884 to 896 (SASASRSRSASQE) the composition is skewed to low complexity. Residue Ser898 is modified to Phosphoserine. 2 stretches are compositionally biased toward basic and acidic residues: residues 906 to 935 (DGEK…DLRR) and 1044 to 1055 (TDGEASPLKEAE). Ser1049 bears the Phosphoserine mark. One copy of the III repeat lies at 1092–1378 (NPIRKACHYI…IFVALIIITF (287 aa)). Residues 1101-1117 (IVNLRYFEMCILLVIAA) form a helical membrane-spanning segment. Over 1118–1141 (SSIALAAEDPVLTNSERNKVLRYF) the chain is Extracellular. A helical membrane pass occupies residues 1142 to 1161 (DYVFTGVFTFEMVIKMIDQG). The Cytoplasmic portion of the chain corresponds to 1162 to 1169 (LILQDGSY). A helical transmembrane segment spans residues 1170-1192 (FRDLWNILDFVVVVGALVAFALA). The Extracellular segment spans residues 1193–1206 (NALGTNKGRDIKTI). A helical membrane pass occupies residues 1207–1224 (KSLRVLRVLRPLKTIKRL). Over 1225–1243 (PKLKAVFDCVVTSLKNVFN) the chain is Cytoplasmic. The chain crosses the membrane as a helical span at residues 1244-1263 (ILIVYKLFMFIFAVIAVQLF). Over 1264–1350 (KGKFFYCTDS…RGPSRSNRME (87 aa)) the chain is Extracellular. Residues 1351–1374 (MSIFYVVYFVVFPFFFVNIFVALI) traverse the membrane as a helical segment. Topologically, residues 1375-1431 (IITFQEQGDKMMEECSLEKNERACIDFAISAKPLTRYMPQNRHTFQYRVWHFVVSPS) are cytoplasmic. An IV repeat occupies 1415–1678 (NRHTFQYRVW…LFVAVIMDNF (264 aa)). A helical transmembrane segment spans residues 1432-1450 (FEYTIMAMIALNTVVLMMK). Topologically, residues 1451-1467 (YYSAPWTYELALKYLNI) are extracellular. Residues 1468–1485 (AFTMVFSLECVLKVIAFG) traverse the membrane as a helical segment. Over 1486 to 1493 (FLNYFRDT) the chain is Cytoplasmic. The chain crosses the membrane as a helical span at residues 1494–1512 (WNIFDFITVIGSITEIILT). At 1513-1523 (DSKLVNTSGFN) the chain is on the extracellular side. Asn1518 and Asn1523 each carry an N-linked (GlcNAc...) asparagine glycan. Residues 1524–1542 (MSFLKLFRAARLIKLLRQG) traverse the membrane as a helical segment. Residues 1543–1561 (YTIRILLWTFVQSFKALPY) lie on the Cytoplasmic side of the membrane. The helical transmembrane segment at 1562–1581 (VCLLIAMLFFIYAIIGMQVF) threads the bilayer. Topologically, residues 1582 to 1650 (GNIKLDEESH…NESERCGTDL (69 aa)) are extracellular. N-linked (GlcNAc...) asparagine glycosylation is present at Asn1641. A helical membrane pass occupies residues 1651-1676 (AYVYFVSFIFFCSFLMLNLFVAVIMD). Topologically, residues 1677–2222 (NFEYLTRDSS…LSDTEEDDKC (546 aa)) are cytoplasmic. Residues 1691 to 1726 (HHLDEFVRVWAEYDRAACGRIHYTEMYEMLTLMSPP) form the EF-hand domain. Residues Asp1704, Arg1710, and Glu1715 each contribute to the Ca(2+) site. Residues 1970-2135 (SAHRLNSDSG…QQGQHPSPQH (166 aa)) are disordered. The span at 1974-1994 (LNSDSGHKSDTHRSGGRERGR) shows a compositional bias: basic and acidic residues. A phosphoserine mark is found at Ser2003 and Ser2022. The span at 2010 to 2027 (NSEERGTQADWESPERRQ) shows a compositional bias: basic and acidic residues. Positions 2046 to 2061 (SLSESSIPSISDTSTP) are enriched in low complexity. Over residues 2104–2123 (LASQALESNSACLTESSNSL) the composition is skewed to polar residues. The segment covering 2124 to 2135 (HPQQGQHPSPQH) has biased composition (low complexity).

Belongs to the calcium channel alpha-1 subunit (TC 1.A.1.11) family. CACNA1E subfamily. Interacts with EFHC1. Voltage-dependent calcium channels are multisubunit complexes, consisting of alpha-1, alpha-2, beta and delta subunits in a 1:1:1:1 ratio. The channel activity is directed by the pore-forming and voltage-sensitive alpha-1 subunit. In many cases, this subunit is sufficient to generate voltage-sensitive calcium channel activity. The auxiliary subunits beta and alpha-2/delta linked by a disulfide bridge regulate the channel activity. In terms of tissue distribution, expressed in central nervous system and in insulinoma.

Its subcellular location is the membrane. The catalysed reaction is Ca(2+)(in) = Ca(2+)(out). Voltage-sensitive calcium channels (VSCC) mediate the entry of calcium ions into excitable cells and are also involved in a variety of calcium-dependent processes, including muscle contraction, hormone or neurotransmitter release, gene expression, cell motility, cell division and cell death. The isoform alpha-1E gives rise to R-type calcium currents. R-type calcium channels belong to the 'high-voltage activated' (HVA) group and are blocked by nickel. They are however insensitive to dihydropyridines (DHP). Calcium channels containing alpha-1E subunit could be involved in the modulation of firing patterns of neurons which is important for information processing. The polypeptide is Voltage-dependent R-type calcium channel subunit alpha-1E (Cacna1e) (Rattus norvegicus (Rat)).